Reading from the N-terminus, the 341-residue chain is tRNA N6-adenosine threonylcarbamoyltransferase (341 aa).

Residues histidine 111 and histidine 115 each contribute to the Fe cation site. Residues 134 to 138 (LVSGG), aspartate 167, glycine 180, and asparagine 276 each bind substrate. Position 304 (aspartate 304) interacts with Fe cation.

Belongs to the KAE1 / TsaD family. Fe(2+) serves as cofactor.

The protein resides in the cytoplasm. It carries out the reaction L-threonylcarbamoyladenylate + adenosine(37) in tRNA = N(6)-L-threonylcarbamoyladenosine(37) in tRNA + AMP + H(+). Its function is as follows. Required for the formation of a threonylcarbamoyl group on adenosine at position 37 (t(6)A37) in tRNAs that read codons beginning with adenine. Is involved in the transfer of the threonylcarbamoyl moiety of threonylcarbamoyl-AMP (TC-AMP) to the N6 group of A37, together with TsaE and TsaB. TsaD likely plays a direct catalytic role in this reaction. The protein is tRNA N6-adenosine threonylcarbamoyltransferase of Pseudomonas aeruginosa (strain ATCC 15692 / DSM 22644 / CIP 104116 / JCM 14847 / LMG 12228 / 1C / PRS 101 / PAO1).